We begin with the raw amino-acid sequence, 224 residues long: UPF0758 protein Csal_2972 (224 aa).

The 123-residue stretch at 102–224 folds into the MPN domain; it reads ALTSPTLVRR…VVSFAERGWL (123 aa). Zn(2+) is bound by residues histidine 173, histidine 175, and aspartate 186. The short motif at 173-186 is the JAMM motif element; that stretch reads HNHPSGVAEPSDAD.

Belongs to the UPF0758 family.

The sequence is that of UPF0758 protein Csal_2972 from Chromohalobacter salexigens (strain ATCC BAA-138 / DSM 3043 / CIP 106854 / NCIMB 13768 / 1H11).